The chain runs to 315 residues: Ribose-phosphate pyrophosphokinase (315 aa).

ATP is bound by residues 37–39 (DGE) and 96–97 (RQ). Mg(2+) contacts are provided by H131 and D170. The active site involves K194. Residues R196, D220, and 224–228 (DTGGT) contribute to the D-ribose 5-phosphate site.

This sequence belongs to the ribose-phosphate pyrophosphokinase family. Class I subfamily. In terms of assembly, homohexamer. Requires Mg(2+) as cofactor.

Its subcellular location is the cytoplasm. The catalysed reaction is D-ribose 5-phosphate + ATP = 5-phospho-alpha-D-ribose 1-diphosphate + AMP + H(+). It functions in the pathway metabolic intermediate biosynthesis; 5-phospho-alpha-D-ribose 1-diphosphate biosynthesis; 5-phospho-alpha-D-ribose 1-diphosphate from D-ribose 5-phosphate (route I): step 1/1. Functionally, involved in the biosynthesis of the central metabolite phospho-alpha-D-ribosyl-1-pyrophosphate (PRPP) via the transfer of pyrophosphoryl group from ATP to 1-hydroxyl of ribose-5-phosphate (Rib-5-P). The polypeptide is Ribose-phosphate pyrophosphokinase (Photorhabdus laumondii subsp. laumondii (strain DSM 15139 / CIP 105565 / TT01) (Photorhabdus luminescens subsp. laumondii)).